The sequence spans 142 residues: Endoribonuclease YbeY (142 aa).

Residues histidine 100, histidine 104, and histidine 110 each coordinate Zn(2+).

Belongs to the endoribonuclease YbeY family. Zn(2+) is required as a cofactor.

It localises to the cytoplasm. Its function is as follows. Single strand-specific metallo-endoribonuclease involved in late-stage 70S ribosome quality control and in maturation of the 3' terminus of the 16S rRNA. In Helicobacter pylori (strain G27), this protein is Endoribonuclease YbeY.